The sequence spans 429 residues: Nicotinate phosphoribosyltransferase (429 aa).

3 residues coordinate nicotinate: Y15, F177, and T229. At H232 the chain carries Phosphohistidine; by autocatalysis. Position 294 (R294) interacts with nicotinate. T355 serves as a coordination point for 5-phospho-alpha-D-ribose 1-diphosphate.

This sequence belongs to the NAPRTase family. Transiently phosphorylated on a His residue during the reaction cycle. Phosphorylation strongly increases the affinity for substrates and increases the rate of nicotinate D-ribonucleotide production. Dephosphorylation regenerates the low-affinity form of the enzyme, leading to product release.

It is found in the cytoplasm. The protein localises to the nucleus. It carries out the reaction nicotinate + 5-phospho-alpha-D-ribose 1-diphosphate + ATP + H2O = nicotinate beta-D-ribonucleotide + ADP + phosphate + diphosphate. The protein operates within cofactor biosynthesis; NAD(+) biosynthesis; nicotinate D-ribonucleotide from nicotinate: step 1/1. Functionally, catalyzes the first step in the biosynthesis of NAD from nicotinic acid, the ATP-dependent synthesis of beta-nicotinate D-ribonucleotide from nicotinate and 5-phospho-D-ribose 1-phosphate. Essential for growth under anaerobic conditions. The sequence is that of Nicotinate phosphoribosyltransferase (NPT1) from Saccharomyces cerevisiae (strain ATCC 204508 / S288c) (Baker's yeast).